The chain runs to 51 residues: Ribosome biogenesis protein Nop10 (51 aa).

The protein belongs to the NOP10 family.

Its function is as follows. Involved in ribosome biogenesis; more specifically in 18S rRNA pseudouridylation and in cleavage of pre-rRNA. In Methanosarcina barkeri (strain Fusaro / DSM 804), this protein is Ribosome biogenesis protein Nop10.